The chain runs to 252 residues: Phosphoglycolate phosphatase (252 aa).

Aspartate 13 (nucleophile) is an active-site residue. Positions 13, 15, and 192 each coordinate Mg(2+).

It belongs to the HAD-like hydrolase superfamily. CbbY/CbbZ/Gph/YieH family. Monomer. It depends on Mg(2+) as a cofactor. Requires chloride as cofactor.

The catalysed reaction is 2-phosphoglycolate + H2O = glycolate + phosphate. The protein operates within organic acid metabolism; glycolate biosynthesis; glycolate from 2-phosphoglycolate: step 1/1. Specifically catalyzes the dephosphorylation of 2-phosphoglycolate. Is involved in the dissimilation of the intracellular 2-phosphoglycolate formed during the DNA repair of 3'-phosphoglycolate ends, a major class of DNA lesions induced by oxidative stress. The protein is Phosphoglycolate phosphatase of Shigella flexneri.